A 2431-amino-acid chain; its full sequence is Reducing polyketide synthase rads1 (2431 aa).

One can recognise a Ketosynthase family 3 (KS3) domain in the interval 10–440; it reads RAPIAIIGLA…GTNAHIVLER (431 aa). Active-site for beta-ketoacyl synthase activity residues include C184, H319, and H363. The interval 558–895 is malonyl-CoA:ACP transacylase (MAT) domain; it reads FVFTGQGAQW…NLAAELFRRG (338 aa). The segment at 944–1080 is N-terminal hotdog fold; the sequence is KSILGAELPS…GLISIAYEDT (137 aa). The 324-residue stretch at 944 to 1267 folds into the PKS/mFAS DH domain; that stretch reads KSILGAELPS…LAELEVDDAA (324 aa). The segment at 946–1264 is dehydratase (DH) domain; it reads ILGAELPSMD…DFRLAELEVD (319 aa). The Proton acceptor; for dehydratase activity role is filled by H976. Residues 1108-1267 form a C-terminal hotdog fold region; sequence PETCSKERFY…LAELEVDDAA (160 aa). D1174 acts as the Proton donor; for dehydratase activity in catalysis. The segment at 1705–2023 is enoyl reductase (ER) domain; that stretch reads GLLNTLHFVP…QGKHLGKMIL (319 aa). The active-site Phosphocysteine intermediate is the C1822. The interval 2048–2228 is ketoreductase (KR) domain; sequence ATYLIVGGLG…VSVNLGIMRD (181 aa). The Carrier domain maps to 2346–2423; the sequence is VAAAIITEAL…TFAVQIAKKS (78 aa). O-(pantetheine 4'-phosphoryl)serine is present on S2383.

It functions in the pathway secondary metabolite biosynthesis. Reducing polyketide synthase; part of the gene cluster that mediates the biosynthesis of radicicol, a resorcylic acid lactone (RAL) that irreversibly inhibits the HSP90 molecular chaperone, an important target for cancer chemotherapy. The cluster encodes only two apparent post-PKS enzymes, a cytochrome P450 monooxygenase (radP) and a non-heme halogenase (radH) that introduce the epoxide and the chlorine, respectively. If this cluster includes all the genes required for radicicol biosynthesis, the remaining structural features of radicicol are presumably generated by the PKSs rads1 and rads2. The C-2' ketone could arise if the R-PKS rads1 and NR-PKS rads2 each carry out four iterations, in contrast to the five iteration-three iteration split for the hypothemycin PKSs. The origin of the cis 5',6' double bond is not known. The radicicol R-PKS radS1 ER domain may catalyze either double bond isomerization or reduction in the third iteration. The sequence is that of Reducing polyketide synthase rads1 from Floropilus chiversii (Chaetomium chiversii).